The sequence spans 225 residues: MRIVFDIGGSVLVPDEPDVKFIEEIAYQLTKISEDHEVAVVVGGGRVAREYIQAAKSFTPNETFKDYIGIHITRANAMLLIAALREKAYPFVVSDFRKAWEVMQLKKIPIMGGTHPGHTTDAVAALLAEYLQADLLVVITNVDGVYDSDPKKNPNAKKLDRISTEKLVEIAMQSESKAGGSGVVDALAAKFIQRGEIKTLIIGKDDARTLFDAIKGKHKGTLVEP.

An ATP-binding site is contributed by 9-10 (GS). G44 contacts UMP. G45 and R49 together coordinate ATP. Residues D66 and 114 to 120 (THPGHTT) each bind UMP. ATP is bound by residues T140, N141, Y146, and D149.

This sequence belongs to the UMP kinase family. Homohexamer.

It is found in the cytoplasm. It carries out the reaction UMP + ATP = UDP + ADP. It participates in pyrimidine metabolism; CTP biosynthesis via de novo pathway; UDP from UMP (UMPK route): step 1/1. With respect to regulation, inhibited by UTP. In terms of biological role, catalyzes the reversible phosphorylation of UMP to UDP. The protein is Uridylate kinase of Thermococcus sibiricus (strain DSM 12597 / MM 739).